Consider the following 279-residue polypeptide: MNLPVATALFTPSWHAELELAYARFGDCTRPTRRRHLGPLRVQKHLYAEGPEVCQHIIVHPPGGIAGGDRLDISARVAQGAWAQITSPGAAKWYRAAGPAYQSLNLHVADGATLEWLPQETIVYSAAQAELTTSIELEGDARLFYWDVVALGRPASGERFDLGHFQAHLDIRRDGRLLWHERQRIVGADGLLDSPIGLDGHPVFATLLVTGEIDAELLERCRSLGHEVRGDLTQLPGLLVARCLASEALLARAWLIDLWRLLRPALLGREALPPRIWNT.

This sequence belongs to the UreD family. As to quaternary structure, ureD, UreF and UreG form a complex that acts as a GTP-hydrolysis-dependent molecular chaperone, activating the urease apoprotein by helping to assemble the nickel containing metallocenter of UreC. The UreE protein probably delivers the nickel.

The protein resides in the cytoplasm. Its function is as follows. Required for maturation of urease via the functional incorporation of the urease nickel metallocenter. This Pseudomonas fluorescens (strain Pf0-1) protein is Urease accessory protein UreD.